Consider the following 273-residue polypeptide: 2,3,4,5-tetrahydropyridine-2,6-dicarboxylate N-succinyltransferase (273 aa).

The substrate site is built by arginine 106 and aspartate 143.

The protein belongs to the transferase hexapeptide repeat family. As to quaternary structure, homotrimer.

Its subcellular location is the cytoplasm. It carries out the reaction (S)-2,3,4,5-tetrahydrodipicolinate + succinyl-CoA + H2O = (S)-2-succinylamino-6-oxoheptanedioate + CoA. It participates in amino-acid biosynthesis; L-lysine biosynthesis via DAP pathway; LL-2,6-diaminopimelate from (S)-tetrahydrodipicolinate (succinylase route): step 1/3. This Wolbachia sp. subsp. Brugia malayi (strain TRS) protein is 2,3,4,5-tetrahydropyridine-2,6-dicarboxylate N-succinyltransferase.